The primary structure comprises 275 residues: NH(3)-dependent NAD(+) synthetase (275 aa).

46-53 is an ATP binding site; sequence GISGGQDS. Asp52 provides a ligand contact to Mg(2+). Position 140 (Arg140) interacts with deamido-NAD(+). Position 160 (Thr160) interacts with ATP. Glu165 is a Mg(2+) binding site. Positions 173 and 180 each coordinate deamido-NAD(+). 2 residues coordinate ATP: Lys189 and Thr211. Position 260-261 (260-261) interacts with deamido-NAD(+); it reads HK.

It belongs to the NAD synthetase family. As to quaternary structure, homodimer.

The enzyme catalyses deamido-NAD(+) + NH4(+) + ATP = AMP + diphosphate + NAD(+) + H(+). Its pathway is cofactor biosynthesis; NAD(+) biosynthesis; NAD(+) from deamido-NAD(+) (ammonia route): step 1/1. Its function is as follows. Catalyzes the ATP-dependent amidation of deamido-NAD to form NAD. Uses ammonia as a nitrogen source. This chain is NH(3)-dependent NAD(+) synthetase, found in Escherichia coli (strain K12 / MC4100 / BW2952).